A 584-amino-acid chain; its full sequence is WD repeat-containing protein JIP5 (584 aa).

WD repeat units lie at residues 128-173 (RHKG…GKVD), 180-219 (SAKD…GTNK), 269-314 (DQED…LADQ), and 378-415 (DAVD…DQEE). 2 disordered regions span residues 409–497 (YSDD…SEYI) and 516–563 (KKLI…EKKV). Acidic residues-rich tracts occupy residues 412–429 (DQEE…EEDS) and 450–460 (FDSENNDDGEE). Composition is skewed to basic and acidic residues over residues 483 to 493 (TRNEENKDNTK) and 528 to 552 (SKKE…EVPQ).

This sequence belongs to the WD repeat WDR55 family.

It is found in the nucleus. The protein localises to the nucleolus. The polypeptide is WD repeat-containing protein JIP5 (JIP5) (Lodderomyces elongisporus (strain ATCC 11503 / CBS 2605 / JCM 1781 / NBRC 1676 / NRRL YB-4239) (Yeast)).